The following is a 189-amino-acid chain: UPF0301 protein CCA_00630 (189 aa).

This sequence belongs to the UPF0301 (AlgH) family.

This chain is UPF0301 protein CCA_00630, found in Chlamydia caviae (strain ATCC VR-813 / DSM 19441 / 03DC25 / GPIC) (Chlamydophila caviae).